The chain runs to 500 residues: Aldehyde dehydrogenase (500 aa).

Position 246-251 (246-251 (GSTLVG)) interacts with NAD(+). The active-site Proton acceptor is Glu269. Catalysis depends on Cys303, which acts as the Nucleophile.

The protein belongs to the aldehyde dehydrogenase family.

The enzyme catalyses an aldehyde + NAD(+) + H2O = a carboxylate + NADH + 2 H(+). Its pathway is alcohol metabolism; ethanol degradation; acetate from ethanol: step 2/2. The chain is Aldehyde dehydrogenase (aldA) from Agaricus bisporus (White button mushroom).